Reading from the N-terminus, the 237-residue chain is Pyrimidine 5'-nucleotidase PynA (237 aa).

The Nucleophile role is filled by D9. Positions 9, 11, and 181 each coordinate Mg(2+). The Proton donor role is filled by D11.

Belongs to the HAD-like hydrolase superfamily. YjjG family. Homodimer. The cofactor is Mg(2+). Requires Mn(2+) as cofactor.

The protein resides in the cytoplasm. The enzyme catalyses a ribonucleoside 5'-phosphate + H2O = a ribonucleoside + phosphate. In terms of biological role, nucleotidase that shows high phosphatase activity toward non-canonical pyrimidine nucleotides and three canonical nucleoside 5'-monophosphates (UMP, dUMP and dTMP), and no activity against IMP, UDP, GMP, AMP, UTP or pNPP. Appears to function as a house-cleaning nucleotidase in vivo, since the general nucleotidase activity of it allows it to protect cells against non-canonical pyrimidine derivatives such as 5-fluoro-2'-deoxyuridine monophosphate (5-FdUMP), and prevents the incorporation of potentially mutagenic nucleotides such as 5-bromo-2'-deoxyuridine (5-BrdU) into DNA. Is strictly specific to pyrimidine substrates with 5'-monophosphates and shows no activity against nucleoside di- and triphosphates. The protein is Pyrimidine 5'-nucleotidase PynA of Streptococcus pneumoniae (strain ATCC BAA-255 / R6).